A 468-amino-acid chain; its full sequence is Glutamate--tRNA ligase (468 aa).

The 'HIGH' region motif lies at 14–24; sequence PSPTGFIHLGN. The short motif at 246–250 is the 'KMSKS' region element; sequence KMSKR. K249 is an ATP binding site.

The protein belongs to the class-I aminoacyl-tRNA synthetase family. Glutamate--tRNA ligase type 1 subfamily. Monomer.

Its subcellular location is the cytoplasm. The catalysed reaction is tRNA(Glu) + L-glutamate + ATP = L-glutamyl-tRNA(Glu) + AMP + diphosphate. In terms of biological role, catalyzes the attachment of glutamate to tRNA(Glu) in a two-step reaction: glutamate is first activated by ATP to form Glu-AMP and then transferred to the acceptor end of tRNA(Glu). In Leptothrix cholodnii (strain ATCC 51168 / LMG 8142 / SP-6) (Leptothrix discophora (strain SP-6)), this protein is Glutamate--tRNA ligase.